We begin with the raw amino-acid sequence, 329 residues long: GTPase Obg (329 aa).

The 159-residue stretch at 1–159 (MQFIDYAEIE…RWLRLELKLL (159 aa)) folds into the Obg domain. The 169-residue stretch at 160-328 (AEVGIIGLPN…LLQIVWQLLD (169 aa)) folds into the OBG-type G domain. Residues 166–173 (GLPNAGKS), 191–195 (FTTLV), 213–216 (DIPG), 280–283 (NKMD), and 309–311 (SGV) each bind GTP. 2 residues coordinate Mg(2+): S173 and T193.

Belongs to the TRAFAC class OBG-HflX-like GTPase superfamily. OBG GTPase family. As to quaternary structure, monomer. It depends on Mg(2+) as a cofactor.

It localises to the cytoplasm. Its function is as follows. An essential GTPase which binds GTP, GDP and possibly (p)ppGpp with moderate affinity, with high nucleotide exchange rates and a fairly low GTP hydrolysis rate. Plays a role in control of the cell cycle, stress response, ribosome biogenesis and in those bacteria that undergo differentiation, in morphogenesis control. The sequence is that of GTPase Obg from Rippkaea orientalis (strain PCC 8801 / RF-1) (Cyanothece sp. (strain PCC 8801)).